The following is an 868-amino-acid chain: Translation initiation factor IF-2 (868 aa).

The tract at residues 201 to 269 is disordered; sequence KEEVKPEKVS…GTEKSDKYRE (69 aa). The span at 249 to 260 shows a compositional bias: basic residues; it reads RGGRSKFKKKKG. The 170-residue stretch at 368-537 folds into the tr-type G domain; sequence GRAPVVTIMG…LLQSEVLELK (170 aa). The segment at 377 to 384 is G1; that stretch reads GHVDHGKT. 377-384 contacts GTP; that stretch reads GHVDHGKT. Residues 402-406 form a G2 region; it reads GITQH. Residues 423–426 are G3; sequence DTPG. GTP contacts are provided by residues 423–427 and 477–480; these read DTPGH and NKMD. Residues 477–480 are G4; it reads NKMD. The interval 513–515 is G5; the sequence is SAK.

It belongs to the TRAFAC class translation factor GTPase superfamily. Classic translation factor GTPase family. IF-2 subfamily.

The protein resides in the cytoplasm. One of the essential components for the initiation of protein synthesis. Protects formylmethionyl-tRNA from spontaneous hydrolysis and promotes its binding to the 30S ribosomal subunits. Also involved in the hydrolysis of GTP during the formation of the 70S ribosomal complex. The polypeptide is Translation initiation factor IF-2 (Legionella pneumophila (strain Corby)).